We begin with the raw amino-acid sequence, 203 residues long: Urease accessory protein UreG (203 aa).

14–21 (GPVGSGKT) is a GTP binding site.

It belongs to the SIMIBI class G3E GTPase family. UreG subfamily. As to quaternary structure, homodimer. UreD, UreF and UreG form a complex that acts as a GTP-hydrolysis-dependent molecular chaperone, activating the urease apoprotein by helping to assemble the nickel containing metallocenter of UreC. The UreE protein probably delivers the nickel.

The protein resides in the cytoplasm. In terms of biological role, facilitates the functional incorporation of the urease nickel metallocenter. This process requires GTP hydrolysis, probably effectuated by UreG. The sequence is that of Urease accessory protein UreG from Rhizobium leguminosarum bv. viciae.